The chain runs to 1086 residues: 1,2-beta-oligoglucan phosphorylase (1086 aa).

Asp741 functions as the Proton donor in the catalytic mechanism.

Belongs to the glycosyl hydrolase 94 family. In terms of assembly, monomer.

The catalysed reaction is [(1-&gt;2)-beta-D-glucosyl](n) + phosphate = [(1-&gt;2)-beta-D-glucosyl](n-1) + alpha-D-glucose 1-phosphate. Catalyzes the reversible phosphorolysis of beta-(1-&gt;2)-D-glucans. The minimum length of the substrate for the phosphorolytic reaction is 3 D-glucose units. This is 1,2-beta-oligoglucan phosphorylase from Listeria innocua serovar 6a (strain ATCC BAA-680 / CLIP 11262).